A 324-amino-acid polypeptide reads, in one-letter code: Delta-aminolevulinic acid dehydratase (324 aa).

Residues cysteine 120, cysteine 122, and cysteine 130 each contribute to the Zn(2+) site. Residue lysine 195 is the Schiff-base intermediate with substrate of the active site. Residues arginine 205 and arginine 216 each contribute to the 5-aminolevulinate site. Glutamate 232 serves as a coordination point for Mg(2+). Lysine 247 functions as the Schiff-base intermediate with substrate in the catalytic mechanism. 5-aminolevulinate-binding residues include serine 273 and tyrosine 312.

The protein belongs to the ALAD family. In terms of assembly, homooctamer. Zn(2+) is required as a cofactor.

The catalysed reaction is 2 5-aminolevulinate = porphobilinogen + 2 H2O + H(+). It functions in the pathway porphyrin-containing compound metabolism; protoporphyrin-IX biosynthesis; coproporphyrinogen-III from 5-aminolevulinate: step 1/4. With respect to regulation, allosteric enzyme. Stimulated by magnesium ions. Its function is as follows. Catalyzes an early step in the biosynthesis of tetrapyrroles. Binds two molecules of 5-aminolevulinate per subunit, each at a distinct site, and catalyzes their condensation to form porphobilinogen. This Escherichia coli (strain K12) protein is Delta-aminolevulinic acid dehydratase (hemB).